We begin with the raw amino-acid sequence, 627 residues long: Siderophore iron transporter ARN1 (627 aa).

The Extracellular portion of the chain corresponds to 1 to 70 (MESVHSRDPV…TEIIGSAYNK (70 aa)). A helical membrane pass occupies residues 71-91 (WYLQAILLLSAFICGYGYGLD). At 92-110 (GNIRYIYTGYATSSYSEHS) the chain is on the cytoplasmic side. Residues 111–131 (LLSTINVINAVVSAASQIIYA) traverse the membrane as a helical segment. Topologically, residues 132-135 (RLSD) are extracellular. A helical transmembrane segment spans residues 136–156 (VFGRLYLFISAVILYVVGTII). Topologically, residues 157–167 (QSQAYDVQRYA) are cytoplasmic. Residues 168 to 188 (AGAIFYNAGYVGVILILLIIL) form a helical membrane-spanning segment. Residues 189-197 (SDFSSLKWR) lie on the Extracellular side of the membrane. Residues 198-218 (LLYQFVPTWPFIINTWIAGNI) traverse the membrane as a helical segment. Topologically, residues 219–231 (TSRANPVVNWSWD) are cytoplasmic. A helical membrane pass occupies residues 232–252 (VGMWAFIFPLSCVPIVLCMLH). The Extracellular segment spans residues 253-290 (MQWRARKTPEWHALKGQKSYYQEHGFIKILKQLFWMLD). The chain crosses the membrane as a helical span at residues 291–311 (VVGVLLMGCSLGCILVPLTLA). Over 312-323 (GGVKTTWNDSRL) the chain is Cytoplasmic. The chain crosses the membrane as a helical span at residues 324-344 (IGPFVLGFVLIPILWIWEYRF). The Extracellular portion of the chain corresponds to 345–367 (ARDPILPYRLVKDRAVWSSMGIS). Residues 368–388 (FLIDFIYYMAADYLYTVMIVA) traverse the membrane as a helical segment. Residues 389–398 (VNESVKSATR) lie on the Cytoplasmic side of the membrane. Residues 399-419 (IATLSSFVSTVASPFFALLVT) traverse the membrane as a helical segment. At 420-424 (RCTRL) the chain is on the extracellular side. The helical transmembrane segment at 425–445 (KPFIMFGCALWMVAMGLLYHF) threads the bilayer. The Cytoplasmic segment spans residues 446–454 (RGGSQSHSG). Residues 455 to 475 (IIGALCVWGVGTTLFTYPVTV) traverse the membrane as a helical segment. Residues 476–563 (SVQSAVSHEN…LMNAYKYVQR (88 aa)) lie on the Extracellular side of the membrane. The chain crosses the membrane as a helical span at residues 564–584 (LETIVALVFCVPLIAFSLCLR). Residues 585–627 (DPKLTDTVAVEYIEDGEYVDTKDNDPILDWFEKLPSKFTFKRE) are Cytoplasmic-facing.

It belongs to the major facilitator superfamily.

The protein resides in the cell membrane. Its subcellular location is the endosome membrane. Its function is as follows. Involved in the transport of siderophore ferrichrome and so has a role in iron homeostasis. This is Siderophore iron transporter ARN1 (ARN1) from Saccharomyces cerevisiae (strain ATCC 204508 / S288c) (Baker's yeast).